The chain runs to 236 residues: Phosphoribosylaminoimidazole-succinocarboxamide synthase (236 aa).

Belongs to the SAICAR synthetase family.

The catalysed reaction is 5-amino-1-(5-phospho-D-ribosyl)imidazole-4-carboxylate + L-aspartate + ATP = (2S)-2-[5-amino-1-(5-phospho-beta-D-ribosyl)imidazole-4-carboxamido]succinate + ADP + phosphate + 2 H(+). It participates in purine metabolism; IMP biosynthesis via de novo pathway; 5-amino-1-(5-phospho-D-ribosyl)imidazole-4-carboxamide from 5-amino-1-(5-phospho-D-ribosyl)imidazole-4-carboxylate: step 1/2. The protein is Phosphoribosylaminoimidazole-succinocarboxamide synthase of Pseudomonas syringae pv. tomato (strain ATCC BAA-871 / DC3000).